The following is a 337-amino-acid chain: tRNA N6-adenosine threonylcarbamoyltransferase (337 aa).

His111 and His115 together coordinate Fe cation. Substrate-binding positions include 134-138 (LVSGG), Asp167, Gly180, and Asn272. Asp300 contacts Fe cation.

This sequence belongs to the KAE1 / TsaD family. It depends on Fe(2+) as a cofactor.

The protein resides in the cytoplasm. The catalysed reaction is L-threonylcarbamoyladenylate + adenosine(37) in tRNA = N(6)-L-threonylcarbamoyladenosine(37) in tRNA + AMP + H(+). Its function is as follows. Required for the formation of a threonylcarbamoyl group on adenosine at position 37 (t(6)A37) in tRNAs that read codons beginning with adenine. Is involved in the transfer of the threonylcarbamoyl moiety of threonylcarbamoyl-AMP (TC-AMP) to the N6 group of A37, together with TsaE and TsaB. TsaD likely plays a direct catalytic role in this reaction. This chain is tRNA N6-adenosine threonylcarbamoyltransferase, found in Shewanella loihica (strain ATCC BAA-1088 / PV-4).